A 181-amino-acid chain; its full sequence is UPF0316 protein Bcer98_2136 (181 aa).

A run of 3 helical transmembrane segments spans residues 6-26, 32-52, and 58-78; these read LIFV…ILLV, SAAG…GIVF, and WMNI…GGYI.

The protein belongs to the UPF0316 family.

It localises to the cell membrane. In Bacillus cytotoxicus (strain DSM 22905 / CIP 110041 / 391-98 / NVH 391-98), this protein is UPF0316 protein Bcer98_2136.